The primary structure comprises 415 residues: MVATAASSAFFPLPSADTSSRPGKLGNKPSSLSPLKPKSTPNGGLQVKANASAPPKINGSPVGLKSGGLKTQEDAHSAPPPRTFINQLPDWSMLLAAITTVFLAAEKQWMMLDWKPKRPDMLVDPFGLGSIVQDGLVFRQNFSIRSYEIGADRTASIETVMNHLQETALNHVKIAGLSNDGFGRTPEMYKRDLIWVVAKMQVMVNRYPTWGDTVEVNTWVAKSGKNGMRRDWLISDCNTGEILTRASSVWVMMNQKTRRLSKIPDEVRNEIEPHFVDSPPVIEDDDRKLPKLDEKTADSIRKGLTPRWNDLDVNQHVNNVKYIGWILESTPPEVLETQELCSLTLEYRRECGRESVLESLTAMDPSGGGYGSQFQHLLRLEDGGEIVKGRTEWRPKNGVINGVVPTGESSPGDYS.

2 stretches are compositionally biased toward low complexity: residues 1-16 and 24-41; these read MVATAASSAFFPLPSA and KLGNKPSSLSPLKPKSTP. The transit peptide at 1 to 60 directs the protein to the chloroplast; the sequence is MVATAASSAFFPLPSADTSSRPGKLGNKPSSLSPLKPKSTPNGGLQVKANASAPPKINGS. The segment at 1–81 is disordered; it reads MVATAASSAF…QEDAHSAPPP (81 aa). Catalysis depends on residues Asn314, His316, and Cys351.

This sequence belongs to the acyl-ACP thioesterase family.

The protein resides in the plastid. It localises to the chloroplast. The catalysed reaction is hexadecanoyl-[ACP] + H2O = hexadecanoate + holo-[ACP] + H(+). Its function is as follows. Plays an essential role in chain termination during de novo fatty acid synthesis. High thioesterase activity for palmitoyl-ACP versus other acyl-ACPs. The protein is Palmitoyl-acyl carrier protein thioesterase, chloroplastic (FATB1) of Cuphea hookeriana (Cigar plant).